Here is a 153-residue protein sequence, read N- to C-terminus: Ribosome maturation factor RimP (153 aa).

This sequence belongs to the RimP family.

Its subcellular location is the cytoplasm. Required for maturation of 30S ribosomal subunits. This is Ribosome maturation factor RimP from Synechococcus elongatus (strain ATCC 33912 / PCC 7942 / FACHB-805) (Anacystis nidulans R2).